A 214-amino-acid chain; its full sequence is Ras-related protein RABH1c (214 aa).

A GTP-binding site is contributed by 16 to 23; the sequence is GDQSVGKT. The Effector region motif lies at 38–46; sequence YQPTIGIDF. GTP is bound by residues 64–68, 123–126, and 153–154; these read DTAGQ, NKTD, and SA. A disordered region spans residues 194–214; sequence TSNSSQGEQQGGAGGGGGCSC. Positions 202–214 are enriched in gly residues; sequence QQGGAGGGGGCSC. Residues cysteine 212 and cysteine 214 are each lipidated (S-geranylgeranyl cysteine). Cysteine 214 is modified (cysteine methyl ester).

This sequence belongs to the small GTPase superfamily. Rab family. Interacts with the C-terminus of GC5, but not with GC3.

Its subcellular location is the golgi apparatus membrane. It localises to the cytoplasm. It is found in the cytosol. Protein transport. Regulator of membrane traffic from the Golgi apparatus towards the endoplasmic reticulum (ER). In Arabidopsis thaliana (Mouse-ear cress), this protein is Ras-related protein RABH1c (RABH1C).